The primary structure comprises 162 residues: 2-C-methyl-D-erythritol 2,4-cyclodiphosphate synthase (162 aa).

A divalent metal cation-binding residues include D9 and H11. Residues 9–11 (DVH) and 35–36 (HS) contribute to the 4-CDP-2-C-methyl-D-erythritol 2-phosphate site. H43 is an a divalent metal cation binding site. 4-CDP-2-C-methyl-D-erythritol 2-phosphate is bound by residues 57-59 (DIG), 62-66 (FPDTD), 133-136 (TTTE), F140, and R143.

It belongs to the IspF family. In terms of assembly, homotrimer. It depends on a divalent metal cation as a cofactor.

The catalysed reaction is 4-CDP-2-C-methyl-D-erythritol 2-phosphate = 2-C-methyl-D-erythritol 2,4-cyclic diphosphate + CMP. Its pathway is isoprenoid biosynthesis; isopentenyl diphosphate biosynthesis via DXP pathway; isopentenyl diphosphate from 1-deoxy-D-xylulose 5-phosphate: step 4/6. Involved in the biosynthesis of isopentenyl diphosphate (IPP) and dimethylallyl diphosphate (DMAPP), two major building blocks of isoprenoid compounds. Catalyzes the conversion of 4-diphosphocytidyl-2-C-methyl-D-erythritol 2-phosphate (CDP-ME2P) to 2-C-methyl-D-erythritol 2,4-cyclodiphosphate (ME-CPP) with a corresponding release of cytidine 5-monophosphate (CMP). The sequence is that of 2-C-methyl-D-erythritol 2,4-cyclodiphosphate synthase from Histophilus somni (strain 2336) (Haemophilus somnus).